A 553-amino-acid chain; its full sequence is Transcriptional regulator HilA (553 aa).

The segment at residues 11–107 (NKKFVFDDFI…LYGQGYRFNR (97 aa)) is a DNA-binding region (ompR/PhoB-type). Position 62 is a 4-aspartylphosphate (aspartate 62). The stretch at 372 to 405 (ADIKYYYGWNLFMAGQLEEALQTINECLKLDPTR) is one TPR repeat.

Functionally, the main transcriptional regulator of the Salmonella pathogenicity island 1 (SPI1) gene expression. Activates the expression of invasion genes by a direct action at their promoters and also indirectly by increasing the level of invF. Also binds upstream of prgH and directly activates the expression of prgHIJK operon. This Salmonella paratyphi A (strain ATCC 9150 / SARB42) protein is Transcriptional regulator HilA (hilA).